We begin with the raw amino-acid sequence, 872 residues long: Coatomer subunit gamma-2 (872 aa).

6 HEAT repeats span residues M64–D101, R283–S320, A321–S355, S356–R392, S395–D430, and P467–P504.

It belongs to the COPG family. In terms of assembly, oligomeric complex.

It localises to the cytoplasm. The protein localises to the golgi apparatus membrane. It is found in the cytoplasmic vesicle. Its subcellular location is the COPI-coated vesicle membrane. In terms of biological role, the coatomer is a cytosolic protein complex that binds to dilysine motifs and reversibly associates with Golgi non-clathrin-coated vesicles, which further mediate biosynthetic protein transport from the ER, via the Golgi up to the trans Golgi network. Coatomer complex is required for budding from Golgi membranes, and is essential for the retrograde Golgi-to-ER transport of dilysine-tagged proteins. The sequence is that of Coatomer subunit gamma-2 (copg2) from Xenopus tropicalis (Western clawed frog).